Consider the following 659-residue polypeptide: MAVALRARNAVKVEDGIDTSNIIEEVDDNTKGTRSRASRRRRRRGDEEEKHSEEETYNEFNDDGTLKTEGTLQTGNGSGRPFELVAGLPCSLDVPQYNSALTFPLSVRDSGVLYSSLLSSRRTWISGEMFEVYWTRANKVPSLAIKDESIIKELESSKEQDASGKDRMQRMCDCELMAGPHTFSIKLFIVKDDEKEKKWQEEQEYKKKEKEEQKKLESEQRKKRAEEKKQMLQLKKQEREKQMQLQKEARARAKKEQAEARQRQKEEERQRKLMNKERVKEQKASTSKPKKDQNKKNSDQHMIANLNIMAQRDPELKKLMAKVANGQANMQEIEEFKRVIELAKNLPPPGTPPAKPEVQKAQSKPTDSNETSADSSKSEILQESKTNESDKKATAEQATEPKTHSEENKPESENQSRDNSEKSASSHNQEASIKKEADANSVIKKESSDGDGNKSQQPKRKYNKAPKVADELTEKEKEMQLTAFQQKYVTGAELVLEFAENTNFRFLLPKKAIIQYIPESNRYKMSWLQIHNQSDITRFYKRQVKELTRRIHNAEEKQRVTDEYNVFRDKKCPSPLFSSMTVTFSGIHVKFNSIMMNSFDPKEEVRGYMEDVLAVGTRLSGYNLWYQLDGYDDRELAERLRSELNEYEQSLKPKRQKKQ.

Disordered stretches follow at residues 28-68, 203-309, and 341-470; these read DNTK…TLKT, QEYK…LNIM, and ELAK…KVAD. Positions 33-43 are enriched in basic residues; sequence TRSRASRRRRR. 2 stretches are compositionally biased toward basic and acidic residues: residues 44–54 and 203–299; these read RGDEEEKHSEE and QEYK…KNSD. Positions 191–286 form a coiled coil; sequence KDDEKEKKWQ…ERVKEQKAST (96 aa). A compositionally biased stretch (pro residues) spans 346-355; sequence LPPPGTPPAK. Residues 360-375 show a composition bias toward polar residues; sequence KAQSKPTDSNETSADS. The segment covering 376-421 has biased composition (basic and acidic residues); sequence SKSEILQESKTNESDKKATAEQATEPKTHSEENKPESENQSRDNSE. The segment covering 422–431 has biased composition (polar residues); that stretch reads KSASSHNQEA. Basic and acidic residues predominate over residues 432–452; the sequence is SIKKEADANSVIKKESSDGDG.

Belongs to the SWC3 family. As to quaternary structure, component of the SWR1 chromatin remodeling complex.

The protein resides in the nucleus. Functionally, component of the SWR1 complex which mediates the ATP-dependent exchange of histone H2A for the H2A variant HZT1 leading to transcriptional regulation of selected genes by chromatin remodeling. Involved in chromosome stability. The chain is SWR1-complex protein 3 (SWC3) from Candida glabrata (strain ATCC 2001 / BCRC 20586 / JCM 3761 / NBRC 0622 / NRRL Y-65 / CBS 138) (Yeast).